We begin with the raw amino-acid sequence, 344 residues long: Molybdate/tungstate import ATP-binding protein WtpC (344 aa).

Positions 2–231 constitute an ABC transporter domain; it reads LRVESVSKDY…PVDEGVARFL (230 aa). 33 to 40 contributes to the ATP binding site; it reads GPSGAGKT. The region spanning 280–344 is the Mop domain; sequence KTSARNEFRA…SFKTSAIKVF (65 aa).

The protein belongs to the ABC transporter superfamily. Sulfate/tungstate importer (TC 3.A.1.6) family. As to quaternary structure, the complex is composed of two ATP-binding proteins (WtpC), two transmembrane proteins (WtpB) and a solute-binding protein (WtpA).

It localises to the cell membrane. It catalyses the reaction tungstate(in) + ATP + H2O = tungstate(out) + ADP + phosphate + H(+). Its function is as follows. Part of the ABC transporter complex WtpABC involved in molybdate/tungstate import. Responsible for energy coupling to the transport system. The protein is Molybdate/tungstate import ATP-binding protein WtpC (wtpC) of Pyrococcus abyssi (strain GE5 / Orsay).